The primary structure comprises 247 residues: ATP synthase subunit a, chloroplastic (247 aa).

The next 5 membrane-spanning stretches (helical) occupy residues 28–48, 95–115, 134–154, 199–219, and 220–240; these read GQVL…CLLG, VPFL…GALI, INTT…AGIS, LVVG…IMLL, and GLFT…AYIG.

Belongs to the ATPase A chain family. F-type ATPases have 2 components, CF(1) - the catalytic core - and CF(0) - the membrane proton channel. CF(1) has five subunits: alpha(3), beta(3), gamma(1), delta(1), epsilon(1). CF(0) has four main subunits: a, b, b' and c.

It localises to the plastid. It is found in the chloroplast thylakoid membrane. Its function is as follows. Key component of the proton channel; it plays a direct role in the translocation of protons across the membrane. The sequence is that of ATP synthase subunit a, chloroplastic from Chlorella vulgaris (Green alga).